Reading from the N-terminus, the 174-residue chain is Large ribosomal subunit protein uL16 (174 aa).

The protein belongs to the universal ribosomal protein uL16 family.

The chain is Large ribosomal subunit protein uL16 from Archaeoglobus fulgidus (strain ATCC 49558 / DSM 4304 / JCM 9628 / NBRC 100126 / VC-16).